A 269-amino-acid polypeptide reads, in one-letter code: GTP cyclohydrolase FolE2 (269 aa).

The protein belongs to the GTP cyclohydrolase IV family.

The catalysed reaction is GTP + H2O = 7,8-dihydroneopterin 3'-triphosphate + formate + H(+). Its pathway is cofactor biosynthesis; 7,8-dihydroneopterin triphosphate biosynthesis; 7,8-dihydroneopterin triphosphate from GTP: step 1/1. Functionally, converts GTP to 7,8-dihydroneopterin triphosphate. This Burkholderia mallei (strain NCTC 10229) protein is GTP cyclohydrolase FolE2.